Consider the following 89-residue polypeptide: FXYD domain-containing ion transport regulator 4 (89 aa).

The signal sequence occupies residues 1–20; it reads MERVTLALLLLAGLTALEAN. At 21–38 the chain is on the extracellular side; that stretch reads DPFANKDDPFYYDWKNLQ. A helical membrane pass occupies residues 39-59; the sequence is LSGLICGGLLAIAGIAAVLSG. Residues 60 to 89 lie on the Cytoplasmic side of the membrane; sequence KCKCKSSQKQHSPVPEKAIPLITPGSATTC.

It belongs to the FXYD family. As to quaternary structure, regulatory subunit of the sodium/potassium-transporting ATPase which is composed of a catalytic alpha subunit, a non-catalytic beta subunit and a regulatory subunit. The regulatory subunit, a member of the FXYD protein family, modulates the enzymatic activity in a tissue- and isoform-specific way by changing affinities of the Na+/K+-ATPase toward Na(+), K(+) or ATP.

It localises to the cell membrane. Its subcellular location is the basolateral cell membrane. Associates with and regulates the activity of the sodium/potassium-transporting ATPase (NKA) which catalyzes the hydrolysis of ATP coupled with the exchange of Na(+) and K(+) ions across the plasma membrane. Increases the apparent affinity of the transporter for Na(+) and increases NKA activity. The polypeptide is FXYD domain-containing ion transport regulator 4 (FXYD4) (Homo sapiens (Human)).